We begin with the raw amino-acid sequence, 159 residues long: bZIP transcription factor 11 (159 aa).

Low complexity predominate over residues Met1–Glu21. Positions Met1–Gln47 are disordered. The bZIP domain maps to Glu25–Leu88. The interval Arg27–Lys48 is basic motif. The interval Leu53 to Ile67 is leucine-zipper.

As to quaternary structure, forms heterodimers with BZIP1, BZIP9, BZIP10, BZIP25 and BZIP63. Interacts with ADA2B. As to expression, highly expressed in stems and flowers. Expressed in root tips, cotyledons, leaf vasculature, embryos, apical parts of siliques and funiculi.

It localises to the nucleus. Its function is as follows. Transcription factor that binds to the DNA sequence 5'-ACTCAT-3' in target gene promoters. Promotes POX1/PRODH1 expression in response to hypoosmolarity stress. Positively regulates the expression of ASN1 and POX2/PRODH2 genes, which are involved in amino acid metabolism. Regulates several metabolic pathways such as myo-inositol, raffinose and trehalose. Regulates several trehalose metabolism genes, including TRE1, TPP5 and TPP6. Mediates recruitment of the histone acetylation machinery to activate auxin-induced transcription. Interacts with ADA2B adapter protein to promote ADA2B-mediated recruitment of SAGA-like histone acetyltransferase complexes to specific auxin-responsive genes. The chain is bZIP transcription factor 11 from Arabidopsis thaliana (Mouse-ear cress).